The sequence spans 200 residues: Superoxide dismutase [Mn] 2 (200 aa).

Residues His-28, His-76, Asp-158, and His-162 each contribute to the Mn(2+) site.

It belongs to the iron/manganese superoxide dismutase family. It depends on Mn(2+) as a cofactor.

It carries out the reaction 2 superoxide + 2 H(+) = H2O2 + O2. Destroys superoxide anion radicals which are normally produced within the cells and which are toxic to biological systems. The protein is Superoxide dismutase [Mn] 2 (sod2) of Halobacterium salinarum (strain ATCC 700922 / JCM 11081 / NRC-1) (Halobacterium halobium).